The primary structure comprises 410 residues: MKNEIIERFTSYVKVDTQSDENNENCPSTPGQLTLANMLADELKSIGMTDITVDDNGYVMATLPANTDKDVPTVGFLAHVDTATDFTGKNVNPQIIESYDGHDIVLNDKLNVVLSPEQFPELSRYKGQTLITTDGTTLLGADNKAGIAEIMTAMAYLIKHPDIKHGTIRVAFTPDEEIGRGPHKFDVGRFNAAFAYTIDGGPLGELQYESFNAAAAKLTCYGKSVHPGTAKNKMVNASKIAMEFHHALPKEEAPEYTEGYEGFYHLLSMNGDVSEAALSYIIRDFDRDRFAERKEYMQKTADALAAKYGNESIKLELRDQYYNMREKIEPVKEIVDVAYQAMKNLDIDPIIEPIRGGTDGSQLSYMGLPTPNIFTGGQNFHGKYEYISVDHMEKAVNVIVEIARLFEERA.

His-79 provides a ligand contact to Zn(2+). The active site involves Asp-81. Asp-142 contributes to the Zn(2+) binding site. Glu-176 functions as the Proton acceptor in the catalytic mechanism. Residues Glu-177, Asp-199, and His-381 each contribute to the Zn(2+) site.

Belongs to the peptidase M20B family. Zn(2+) serves as cofactor.

Its subcellular location is the cytoplasm. The enzyme catalyses Release of the N-terminal residue from a tripeptide.. Functionally, cleaves the N-terminal amino acid of tripeptides. This chain is Peptidase T, found in Bacillus velezensis (strain DSM 23117 / BGSC 10A6 / LMG 26770 / FZB42) (Bacillus amyloliquefaciens subsp. plantarum).